Here is an 865-residue protein sequence, read N- to C-terminus: Fatty acyl-CoA synthetase and RNA processing-associated kinase 1 (865 aa).

The region spanning 41–313 (YILGSTLGEG…LKQIKKHEWL (273 aa)) is the Protein kinase domain. Residues 47–55 (LGEGEFGKV) and K80 each bind ATP. Catalysis depends on D175, which acts as the Proton acceptor. The disordered stretch occupies residues 341-398 (KPRRRYGSRPQSSCSTSSLGSRSDKRDSLVIDSTLITFPAPPQESQNHIITRPASIAS). The segment covering 352 to 361 (SSCSTSSLGS) has biased composition (low complexity). S441 is subject to Phosphoserine. 3 disordered regions span residues 480-554 (ISGS…YTTP), 673-733 (TEES…LNEA), and 754-782 (SLYS…YQTN). The segment covering 494–538 (STTMQTSKIQPNNMASSQNHQYNKNKTQNSLQSAKNFYRTSSSSH) has biased composition (polar residues). Basic and acidic residues-rich tracts occupy residues 690-708 (EGQE…EKGS) and 724-733 (NHLERSLNEA).

This sequence belongs to the protein kinase superfamily. Ser/Thr protein kinase family. As to quaternary structure, interacts with FAA3, POL5 and TPA1.

Its subcellular location is the cytoplasm. The enzyme catalyses L-seryl-[protein] + ATP = O-phospho-L-seryl-[protein] + ADP + H(+). The catalysed reaction is L-threonyl-[protein] + ATP = O-phospho-L-threonyl-[protein] + ADP + H(+). Putative serine/threonine-protein kinase that may be involved in rRNA transcription and ribosome biogenesis. In Saccharomyces cerevisiae (strain ATCC 204508 / S288c) (Baker's yeast), this protein is Fatty acyl-CoA synthetase and RNA processing-associated kinase 1 (FRK1).